We begin with the raw amino-acid sequence, 65 residues long: Small ribosomal subunit protein bS21 (65 aa).

Over residues 43-52 the composition is skewed to basic and acidic residues; the sequence is EKKRVKEALA. The segment at 43–65 is disordered; the sequence is EKKRVKEALARKRSRKKARKEQD. The segment covering 53–65 has biased composition (basic residues); it reads RKRSRKKARKEQD.

Belongs to the bacterial ribosomal protein bS21 family.

In Koribacter versatilis (strain Ellin345), this protein is Small ribosomal subunit protein bS21.